A 156-amino-acid chain; its full sequence is Small ribosomal subunit protein uS7 (156 aa).

It belongs to the universal ribosomal protein uS7 family. As to quaternary structure, part of the 30S ribosomal subunit. Contacts proteins S9 and S11.

Its function is as follows. One of the primary rRNA binding proteins, it binds directly to 16S rRNA where it nucleates assembly of the head domain of the 30S subunit. Is located at the subunit interface close to the decoding center, probably blocks exit of the E-site tRNA. In Streptococcus mutans serotype c (strain ATCC 700610 / UA159), this protein is Small ribosomal subunit protein uS7.